A 1373-amino-acid polypeptide reads, in one-letter code: MEVLMAERADLVFHNKAIDGTAMKRLISRLIDHFGMAYTSHILDQVKTLGFRQATLTSISLGIDDLLTTPSKGWLVQDAEQQSLILEKHHHYGNVHAVEKLRQSIEIWYATSEYLRQEMNPNFRMTDPFNPVYIMSFSGARGNASQVHQLVGMRGLMSDPQGQMIDLPIQSNLREGLSLTEYTISCYGARKGVVDTAVRTSDAGYLTRRLVEVVQHIVVRRTDCGTIRGISVSPRNGVGVTERIFIQTLIGRVLANDVYMGLRCIATRNQDIGIGLVNRFITSRAQPIYIRSPFTCRSTSWICQLCYGRSTTHGNLVELGEAVGIIAGQSIGEPGTQLTLRTFHTGGVFTGGIAEHVRAPSNGKIKFNEDLVHPTRTRHGHPAFLCHIDLHVTIESQDIIHKVNIPPKSFLLVQNDQYVESEQVIAEIRAGTSTLKERVQKHIYSDSEGEMHWSTDVYHTPEYTHGNVHLLPKTSHLWVLSGSPCRSSIVPFPLHKDQDQMNVQSLYVEERYISDLSMNNDRVRHKLFGWDQKRGRVSYYSGPDRIISNRNWDSIYPLILHENSDLLAKRRRNRFIIPFQYDQEQEKELRPPGIVIKIPIKGILRRNSILAYFDDPRYRRSSSGIAKYGTIEVDSIIKKEDLIEYRKTREFGPKYQIQIKVNRFFFIPEEVHILPRSSSIMVRNNSIIGVDTRITLNIRSQVGGLVRVEKKKKRIELKISSGDIHFPGETDNIARYSGILIPPGRVKNTESKFKNWIYVQRITPIKKKYFVSVRPVVTYEIADGINLATFFPQDLLQEKNNLQLRVVNYILYGDGKPIRGIFHTSIQLVRTCLVLNWDQDRAGSIEEEEAYTSLAEVRVNDLIRNFIRIDLVKSPISSTGKENDMAGSGLIPNNGSDRINTNPFFSKAKTQSLSQHQGTIRTLLNRNKEGQGESLMVLSSSNCSRIGPLNGSKYHNVTKESIQEDPMISIRNSLGPLGTVPNILNFSSSYHSITHNEILFNKYLLPDNSRETFLVPKSYFMDENRRIYNLDPCSNIILTPFNLNWCFLHHDYWEDTSTIISLGQFLCENICISKDGPCVKSGQIIIVHVDSLVIRLAKYHLATRGATVHGHYGEILYEGDTLVTFIYEKSRSGDITQGLPKVEQVLEVRSIDSISMNLEKRVEGWNERITGFLGIPWEFFISAQLTIVQSRISLVNKIQKVYRSQGVQIHNRHIETIVRQITSKVLVSEDGMSNVFSPRELIGLLRAERIGRALEDDICYRAILLGITRASLNTQSFISEASFQETTRVLAKAALRSRIDWLKGLKENVVLGGMIPVGTGFKGFVHHSREHNNISLEIKKKNLFDGKMRDILFYHREFCGSCIPKNFHDTSEQ.

Cysteine 224, cysteine 296, cysteine 303, and cysteine 306 together coordinate Zn(2+).

The protein belongs to the RNA polymerase beta' chain family. RpoC2 subfamily. In terms of assembly, in plastids the minimal PEP RNA polymerase catalytic core is composed of four subunits: alpha, beta, beta', and beta''. When a (nuclear-encoded) sigma factor is associated with the core the holoenzyme is formed, which can initiate transcription. Zn(2+) is required as a cofactor.

It is found in the plastid. The protein localises to the chloroplast. The catalysed reaction is RNA(n) + a ribonucleoside 5'-triphosphate = RNA(n+1) + diphosphate. In terms of biological role, DNA-dependent RNA polymerase catalyzes the transcription of DNA into RNA using the four ribonucleoside triphosphates as substrates. In Amborella trichopoda, this protein is DNA-directed RNA polymerase subunit beta''.